Consider the following 156-residue polypeptide: Single-stranded DNA-binding protein 1 (156 aa).

The SSB domain occupies M1–E104. Positions Q122–P146 are disordered.

In terms of assembly, homotetramer.

In Staphylococcus aureus (strain MSSA476), this protein is Single-stranded DNA-binding protein 1 (ssb1).